We begin with the raw amino-acid sequence, 515 residues long: Phospholipase A1-Igamma1, chloroplastic (515 aa).

A chloroplast-targeting transit peptide spans 1–44; sequence MATIPSHNLRPHTTNQRTQYSLSFRPHFSRSTLITFPARSSPAR. The short motif at 301–305 is the GXSXG element; that stretch reads GHSLG. Catalysis depends on serine 303, which acts as the Acyl-ester intermediate. Residues aspartate 366 and histidine 422 each act as charge relay system in the active site.

It belongs to the AB hydrolase superfamily. Lipase family. In terms of tissue distribution, ubiquitous. Highly expressed in leaves.

Its subcellular location is the plastid. The protein localises to the chloroplast. It catalyses the reaction 1,2-dihexadecanoyl-sn-glycero-3-phosphocholine + H2O = 2-hexadecanoyl-sn-glycero-3-phosphocholine + hexadecanoate + H(+). It carries out the reaction a 1,2-diacyl-3-O-(beta-D-galactosyl)-sn-glycerol + H2O = an acyl-3-O-(beta-D-galactosyl)-sn-glycerol + a fatty acid + H(+). The enzyme catalyses a 1,2-diacyl-3-O-[alpha-D-galactosyl-(1-&gt;6)-beta-D-galactosyl]-sn-glycerol + H2O = acyl-3-O-[alpha-D-galactosyl-(1-&gt;6)-beta-D-galactosyl]-sn-glycerol + a fatty acid + H(+). Acylhydrolase with a broad specificity. Catalyzes the hydrolysis of phosphatidylcholine at the sn-1 position. Moderate activity toward phosphatidylcholine (PC), monogalactosyldiacylglycerol (MGDG), digalactosyldiacylglycerol (DGDG) and triacylglycerol (TAG). May display dual sn-1/sn-2 substrate specificity. Could be involved in early wound response. The chain is Phospholipase A1-Igamma1, chloroplastic from Arabidopsis thaliana (Mouse-ear cress).